The chain runs to 462 residues: MIPVIALVGRPNVGKSTLFNRITKTQDALVADFPGLTRDRQYGHAQHENKSFIIVDTGGIGVDDIEVDTLMSKQSQVALNEANVILFLVDGRSGLTGIDQQIAQALRKLNKKVHLVVNKTDGINEDIACADFQSLGITDIHAISASHGGGISSLLEEILEPFITEMHEATDDKAIKIAFAGRPNVGKSTLINRILGEERVVVYDMPGTTRDSISIPFTREDKQYVLIDTAGVRRKSRIDEKIEKFSVIKTLQAIKEAHVCLLLLDANEGITDQDMNLLGFIIESGKALVIAVNKWDGLEEEHKEKIKSELSRRLHFANFAKIRFISALHGSGVGGLFKDINEAYHSAIQSFSTPKLTRLLQDISAKHTPPCINGRRIKLRYAHLGGHNPPVIVIHGNQLDALPESYKRYLNNEFIKHLGLVGTPLKIEFKGGQNPFANKKNKLSQRQVNKKKRLMRWAKNKK.

EngA-type G domains are found at residues 3–166 and 175–348; these read PVIA…ITEM and IKIA…HSAI. Residues 9–16, 56–60, 118–121, 181–188, 228–232, and 293–296 each bind GTP; these read GRPNVGKS, DTGGI, NKTD, DTAGV, and NKWD. A KH-like domain is found at 349–433; that stretch reads QSFSTPKLTR…PLKIEFKGGQ (85 aa).

This sequence belongs to the TRAFAC class TrmE-Era-EngA-EngB-Septin-like GTPase superfamily. EngA (Der) GTPase family. Associates with the 50S ribosomal subunit.

GTPase that plays an essential role in the late steps of ribosome biogenesis. The chain is GTPase Der from Legionella pneumophila (strain Lens).